Consider the following 199-residue polypeptide: V-set and transmembrane domain-containing protein 5 (199 aa).

An N-terminal signal peptide occupies residues 1 to 27 (MRPLRCGERTQGIPLGLLAFWVTAARC). Over 28 to 146 (LQSQGVSLYI…VSEIRYEDLH (119 aa)) the chain is Extracellular. An Ig-like C2-type domain is found at 35–138 (LYIPQSAINA…QSGTILLRVS (104 aa)). N43, N87, and N101 each carry an N-linked (GlcNAc...) asparagine glycan. Residues 147–167 (FVAVFFALLAAVAVVLISLMW) form a helical membrane-spanning segment. Residues 168–199 (VCNQCAYKFQRKRRYKLKESTTEEIEMKEVEC) lie on the Cytoplasmic side of the membrane. Positions 169–185 (CNQCAYKFQRKRRYKLK) are important for CDC42-dependent filopodia induction.

As to quaternary structure, can homooligomerize through cis interactions within the same cell membrane. N-glycosylated. As to expression, highly expressed in the central nervous system (CNS), with the highest expression in thalamus, hippocampus, cerebrum, midbrain and spinal cord. Also highly expressed in stomach, kidney and small intestine.

It is found in the cell membrane. The protein localises to the cell projection. It localises to the dendrite. The protein resides in the axon. Its function is as follows. Cell adhesion-like membrane protein of the central nervous system (CNS) which modulates both the position and complexity of central neurons by altering their membrane morphology and dynamics. Involved in the formation of neuronal dendrites and protrusions including dendritic filopodia. In synaptogenesis, regulates synapse formation by altering dendritic spine morphology and actin distribution. Promotes formation of unstable neuronal spines such as thin and branched types. Regulates neuronal morphogenesis and migration during cortical development in the brain. The protein is V-set and transmembrane domain-containing protein 5 of Mus musculus (Mouse).